The sequence spans 503 residues: Zinc metalloproteinase nas-14 (503 aa).

An N-terminal signal peptide occupies residues 1-25 (MRLLYSLFHCSAFLVGFTLSVGVLP). One can recognise a Peptidase M12A domain in the interval 116–312 (NLVTYPDKLW…KKVNKLYQCG (197 aa)). 2 disulfide bridges follow: C158–C311 and C182–C202. An N-linked (GlcNAc...) asparagine glycan is attached at N192. A Zn(2+)-binding site is contributed by H210. E211 is an active-site residue. 2 residues coordinate Zn(2+): H214 and H220. Residues 317-340 (TSSTTTTTTTTTTTTTTEEPTTTT) are compositionally biased toward low complexity. The interval 317-377 (TSSTTTTTTT…TPKPVERSRN (61 aa)) is disordered. Positions 342-351 (VEEKPKDKKV) are enriched in basic and acidic residues. Positions 352–370 (SSTTTTTKKPTTTTTTTPK) are enriched in low complexity. 3 cysteine pairs are disulfide-bonded: C380-C414, C387-C407, and C396-C411. Residues 380-414 (CEDLNAHCGMWEQLGHCQHSVKYMAHYCRKACNLC) enclose the ShKT 1 domain. The interval 422-464 (TTTTPKPVPRNKEKENKSASSTTRGTSTATSTTPKTTTTTTSA) is disordered. N-linked (GlcNAc...) asparagine glycosylation is present at N437. Low complexity predominate over residues 439–464 (SASSTTRGTSTATSTTPKTTTTTTSA). Intrachain disulfides connect C469/C503, C476/C496, and C485/C500. The 35-residue stretch at 469 to 503 (CEDKNLFCSYWAKIGECNSESKFMKIFCKASCGKC) folds into the ShKT 2 domain.

Zn(2+) serves as cofactor. As to expression, expressed in pharyngeal muscles and mc cells.

It is found in the secreted. In terms of biological role, metalloprotease. This is Zinc metalloproteinase nas-14 (nas-14) from Caenorhabditis elegans.